The primary structure comprises 476 residues: Cytochrome P450 monooxygenase ppzE (476 aa).

Residue cysteine 452 participates in heme binding.

This sequence belongs to the cytochrome P450 family. Heme serves as cofactor.

It functions in the pathway secondary metabolite biosynthesis. In terms of biological role, cytochrome P450 monooxygenase; part of the gene cluster that mediates the biosynthesis of pyrrolopyrazines, secondary metabolites showing insecticidal activity. The role of ppzE within the pathway has still to be determined. The single multifunctional NRPS ppzA is sufficient to produce peramine via condensation of 1-pyrroline-5-carboxylate and arginine, N-methylation of the alpha-amino group of arginine and reduction of the thioester and the cyclization to form an iminium ion resulting in release from the peptide synthetase. Deprotonation of this intermediate and oxidation of the pyrroline ring would give rise to peramine. In Epichloe species that produce only peramine, the peramine synthetase gene is not localized in a gene cluster, in contrast to Metarhizium species that contain additional pyrrolopyrazine biosynthesis genes. The 2-oxoglutarate-Fe(II) type oxidoreductase ppzC hydroxylates peramine to yield the newly identified compound 8-hydroxyperamine whereas ppzD converts L-proline into trans-4-hydroxy-L-proline, a precursor of peramine biosynthesis. The sequence is that of Cytochrome P450 monooxygenase ppzE from Metarhizium majus (strain ARSEF 297).